Reading from the N-terminus, the 312-residue chain is tRNA dimethylallyltransferase (312 aa).

15 to 22 (GPTAAGKS) is an ATP binding site. Residue 17-22 (TAAGKS) participates in substrate binding. The segment at 40–43 (DSMQ) is interaction with substrate tRNA.

Belongs to the IPP transferase family. As to quaternary structure, monomer. Mg(2+) serves as cofactor.

It catalyses the reaction adenosine(37) in tRNA + dimethylallyl diphosphate = N(6)-dimethylallyladenosine(37) in tRNA + diphosphate. Functionally, catalyzes the transfer of a dimethylallyl group onto the adenine at position 37 in tRNAs that read codons beginning with uridine, leading to the formation of N6-(dimethylallyl)adenosine (i(6)A). This chain is tRNA dimethylallyltransferase, found in Streptomyces coelicolor (strain ATCC BAA-471 / A3(2) / M145).